The primary structure comprises 158 residues: Transcriptional repressor NrdR (158 aa).

Residues 1 to 22 (MRCPYCGSEDTQVKDSRPAEDN) are disordered. A zinc finger lies at 3–34 (CPYCGSEDTQVKDSRPAEDNTSIRRRRICPDC). Basic and acidic residues predominate over residues 11–22 (TQVKDSRPAEDN). The region spanning 49–139 (LMVIKKTGRK…VYRDFSLAED (91 aa)) is the ATP-cone domain.

The protein belongs to the NrdR family. It depends on Zn(2+) as a cofactor.

Functionally, negatively regulates transcription of bacterial ribonucleotide reductase nrd genes and operons by binding to NrdR-boxes. The protein is Transcriptional repressor NrdR of Rhizobium etli (strain CIAT 652).